The chain runs to 100 residues: Aspartyl/glutamyl-tRNA(Asn/Gln) amidotransferase subunit C (100 aa).

This sequence belongs to the GatC family. In terms of assembly, heterotrimer of A, B and C subunits.

The enzyme catalyses L-glutamyl-tRNA(Gln) + L-glutamine + ATP + H2O = L-glutaminyl-tRNA(Gln) + L-glutamate + ADP + phosphate + H(+). It carries out the reaction L-aspartyl-tRNA(Asn) + L-glutamine + ATP + H2O = L-asparaginyl-tRNA(Asn) + L-glutamate + ADP + phosphate + 2 H(+). In terms of biological role, allows the formation of correctly charged Asn-tRNA(Asn) or Gln-tRNA(Gln) through the transamidation of misacylated Asp-tRNA(Asn) or Glu-tRNA(Gln) in organisms which lack either or both of asparaginyl-tRNA or glutaminyl-tRNA synthetases. The reaction takes place in the presence of glutamine and ATP through an activated phospho-Asp-tRNA(Asn) or phospho-Glu-tRNA(Gln). The sequence is that of Aspartyl/glutamyl-tRNA(Asn/Gln) amidotransferase subunit C from Corynebacterium aurimucosum (strain ATCC 700975 / DSM 44827 / CIP 107346 / CN-1) (Corynebacterium nigricans).